The sequence spans 88 residues: Beta-defensin 115 (88 aa).

The first 27 residues, 1–27 (MLPDHFSPLSGDIKLSVLALVVLVVLA), serve as a signal peptide directing secretion. Intrachain disulfides connect Cys-38–Cys-65, Cys-45–Cys-59, and Cys-49–Cys-66.

The protein belongs to the beta-defensin family.

The protein localises to the secreted. Its function is as follows. Has antibacterial activity. The chain is Beta-defensin 115 (DEFB115) from Homo sapiens (Human).